The chain runs to 176 residues: Tubulin polymerization-promoting protein family member 3 (176 aa).

Residues 132–151 (TGSHKERFDQTGKGKGKSGR) form a disordered region. Residues 134–151 (SHKERFDQTGKGKGKSGR) are compositionally biased toward basic and acidic residues.

It belongs to the TPPP family.

It localises to the cytoplasm. It is found in the cytoskeleton. In terms of biological role, regulator of microtubule dynamic that has microtubule bundling activity. This is Tubulin polymerization-promoting protein family member 3 (tppp3) from Xenopus laevis (African clawed frog).